The primary structure comprises 181 residues: MAVLFRDQTKSALEALLFVASEPLTVQALARIVEIDVADALELLLELAKEYQDRPGGLKIVQVSDTWQICTRPECAPYIERLYRKSGTGLSKAAIETLAIIAYRQPITRSEVEMIRGVKVDSPINTLLERNLIEEKGRREGPGRPVLYGTTLEFLKHFGLKDVSELPPLEEFLVEGETIDI.

This sequence belongs to the ScpB family. In terms of assembly, homodimer. Homodimerization may be required to stabilize the binding of ScpA to the Smc head domains. Component of a cohesin-like complex composed of ScpA, ScpB and the Smc homodimer, in which ScpA and ScpB bind to the head domain of Smc. The presence of the three proteins is required for the association of the complex with DNA.

It is found in the cytoplasm. Functionally, participates in chromosomal partition during cell division. May act via the formation of a condensin-like complex containing Smc and ScpA that pull DNA away from mid-cell into both cell halves. The polypeptide is Segregation and condensation protein B (Desulforamulus reducens (strain ATCC BAA-1160 / DSM 100696 / MI-1) (Desulfotomaculum reducens)).